The chain runs to 277 residues: Thymidylate synthase (277 aa).

Position 21 (Arg21) interacts with dUMP. His51 lines the (6R)-5,10-methylene-5,6,7,8-tetrahydrofolate pocket. 126-127 (RR) is a dUMP binding site. Cys159 functions as the Nucleophile in the catalytic mechanism. DUMP-binding positions include 179–182 (RSAD), Asn190, and 220–222 (HLY). Asp182 is a (6R)-5,10-methylene-5,6,7,8-tetrahydrofolate binding site. Ser276 serves as a coordination point for (6R)-5,10-methylene-5,6,7,8-tetrahydrofolate.

This sequence belongs to the thymidylate synthase family. Bacterial-type ThyA subfamily. Homodimer.

It is found in the cytoplasm. It catalyses the reaction dUMP + (6R)-5,10-methylene-5,6,7,8-tetrahydrofolate = 7,8-dihydrofolate + dTMP. Its pathway is pyrimidine metabolism; dTTP biosynthesis. In terms of biological role, catalyzes the reductive methylation of 2'-deoxyuridine-5'-monophosphate (dUMP) to 2'-deoxythymidine-5'-monophosphate (dTMP) while utilizing 5,10-methylenetetrahydrofolate (mTHF) as the methyl donor and reductant in the reaction, yielding dihydrofolate (DHF) as a by-product. This enzymatic reaction provides an intracellular de novo source of dTMP, an essential precursor for DNA biosynthesis. This chain is Thymidylate synthase, found in Saccharophagus degradans (strain 2-40 / ATCC 43961 / DSM 17024).